A 399-amino-acid polypeptide reads, in one-letter code: Unsaturated chondroitin disaccharide hydrolase (399 aa).

The active-site Nucleophile is the D116. The substrate site is built by D116, D176, G234, T236, R248, W252, S366, and S369. D176 functions as the Proton donor in the catalytic mechanism.

It belongs to the glycosyl hydrolase 88 family. In terms of assembly, monomer.

The catalysed reaction is beta-D-4-deoxy-Delta(4)-GlcpA-(1-&gt;3)-beta-D-GalpNAc6S + H2O = N-acetyl-beta-D-galactosamine 6-sulfate + 5-dehydro-4-deoxy-D-glucuronate. Catalyzes the hydrolysis of unsaturated hyaluronate and chondroitin disaccharides. Also degrades unsaturated heparin disaccharides. Releases 4-deoxy-4,5-didehydro D-glucuronic acid or 4-deoxy-4,5-didehydro L-iduronic acid from chondroitin disaccharides, hyaluronan disaccharides and heparin disaccharides and cleaves both glycosidic (1-&gt;3) and (1-&gt;4) bonds. Prefers sulfated glycosaminoglycans compared to unsulfated glycosaminoglycans. Probably required for mammalian cells invasion through the degradation of extracellular sulfated glycosaminoglycans such as chondroitin and hyaluronan. The sequence is that of Unsaturated chondroitin disaccharide hydrolase (ugl) from Streptococcus pyogenes serotype M1.